Here is a 697-residue protein sequence, read N- to C-terminus: Putative ATP-dependent RNA helicase an3 (697 aa).

The segment at 27–189 (ESGVAGTKGR…PLAPNDRVEQ (163 aa)) is disordered. Composition is skewed to basic and acidic residues over residues 89 to 111 (GRSD…DKDA), 135 to 144 (RRTDDRRQDG), and 151 to 170 (RSDK…WSDD). The Q motif signature appears at 221–249 (ESFHDVTMGEIIMGNIQLTRYTRPTPVQK). ATP-binding positions include 241–248 (YTRPTPVQ) and 265–272 (AQTGSGKT). Positions 252 to 444 (IPIIIEKRDL…RDFLDEYIFL (193 aa)) constitute a Helicase ATP-binding domain. The short motif at 388–391 (DEAD) is the DEAD box element. A Helicase C-terminal domain is found at 455 to 616 (NITQKVVWVE…EVPSWLENMA (162 aa)). Residues 619–666 (QHHKSSSRGRSKSRFSGGFGAKDYRQSSGAGSSFGSSRGGRSSGHGGS) are disordered. The segment covering 622–631 (KSSSRGRSKS) has biased composition (basic residues). Over residues 645-654 (SSGAGSSFGS) the composition is skewed to low complexity. Gly residues predominate over residues 655–666 (SRGGRSSGHGGS).

This sequence belongs to the DEAD box helicase family. DDX3/DED1 subfamily.

Its subcellular location is the cell membrane. It localises to the nucleus. The protein resides in the cytoplasm. The protein localises to the stress granule. It is found in the inflammasome. Its subcellular location is the cell projection. It localises to the lamellipodium. It carries out the reaction ATP + H2O = ADP + phosphate + H(+). In terms of biological role, multifunctional ATP-dependent RNA helicase. The ATPase activity can be stimulated by various ribo-and deoxynucleic acids indicative for a relaxed substrate specificity. In vitro can unwind partially double-stranded DNA with a preference for 5'-single-stranded DNA overhangs. Involved in many cellular processes, which do not necessarily require its ATPase/helicase catalytic activities. Involved in the regulation of transcription and translation initiation. Involved in innate immunity. Involved in both stress and inflammatory responses. May negatively regulate extrinsic apoptotic signaling pathway via death domain receptors. May be involved in mitotic chromosome segregation. Required for canonical Wnt signaling involved in anteroposterior neural patterning. The protein is Putative ATP-dependent RNA helicase an3 (an3) of Xenopus laevis (African clawed frog).